The chain runs to 207 residues: Small ribosomal subunit protein uS4 (207 aa).

The tract at residues 31-56 (KCKLDSKPGQHGRTSGARTSDYGNQL) is disordered. Over residues 42–53 (GRTSGARTSDYG) the composition is skewed to polar residues. The region spanning 97-157 (ARLDNVVYRM…EKSKKQVRIV (61 aa)) is the S4 RNA-binding domain.

Belongs to the universal ribosomal protein uS4 family. As to quaternary structure, part of the 30S ribosomal subunit. Contacts protein S5. The interaction surface between S4 and S5 is involved in control of translational fidelity.

One of the primary rRNA binding proteins, it binds directly to 16S rRNA where it nucleates assembly of the body of the 30S subunit. Its function is as follows. With S5 and S12 plays an important role in translational accuracy. The sequence is that of Small ribosomal subunit protein uS4 from Janthinobacterium sp. (strain Marseille) (Minibacterium massiliensis).